The following is a 142-amino-acid chain: Large ribosomal subunit protein uL13c (142 aa).

The protein belongs to the universal ribosomal protein uL13 family. As to quaternary structure, part of the 50S ribosomal subunit.

The protein resides in the plastid. It localises to the chloroplast. This Pyropia yezoensis (Susabi-nori) protein is Large ribosomal subunit protein uL13c.